The chain runs to 496 residues: Probable cytosol aminopeptidase (496 aa).

The Mn(2+) site is built by lysine 268 and aspartate 273. Lysine 280 is an active-site residue. Positions 291, 350, and 352 each coordinate Mn(2+). The active site involves arginine 354.

It belongs to the peptidase M17 family. Requires Mn(2+) as cofactor.

The protein resides in the cytoplasm. It catalyses the reaction Release of an N-terminal amino acid, Xaa-|-Yaa-, in which Xaa is preferably Leu, but may be other amino acids including Pro although not Arg or Lys, and Yaa may be Pro. Amino acid amides and methyl esters are also readily hydrolyzed, but rates on arylamides are exceedingly low.. The enzyme catalyses Release of an N-terminal amino acid, preferentially leucine, but not glutamic or aspartic acids.. Presumably involved in the processing and regular turnover of intracellular proteins. Catalyzes the removal of unsubstituted N-terminal amino acids from various peptides. In Thioalkalivibrio sulfidiphilus (strain HL-EbGR7), this protein is Probable cytosol aminopeptidase.